We begin with the raw amino-acid sequence, 706 residues long: MWLFALLVTLFYGVEGSIYLPQKLYGEVTSPLYPKPYPSDLETTTVITVPMGYRVKLVFWQFDVEPSEGCLYDYVKISADKQTLGRFCGQLDSPLGNPPGSKEFMSQGNKMLLTFHTDFSNEENGTIMFYKGFLAYYQAVDLDECASQPNSVEEGLQPRCQHLCHNYVGGYFCSCHPGYELQKDGQSCQAECSSELYTEPSGYVSSLEYPQPYPPDLRCNYSIRVERGLTVHLKFLDPFEIDDHQQVHCPYDQLQIYANGKNLGEFCGKQRPPDLDTSSNAVDLLFFTDESGDSRGWKLHYTTETIKCPQPKALDEFTIIQDPQPQYQFRDYFTVTCKQGYQLMEGNQALLSFTAVCQHDGTWHRAMPRCKIKNCGQPQSLSNGDFRYITTKGVTTYEASIQYHCHEPYYKMLTRAGSSESMRGIYTCTAQGIWKNEEEGEKMPRCLPVCGKPVNPVTQKERIIGGQPARPGNFPWQAFTTIYGPGGGALLGDRWILTAAHTIYPKYPNKGKNTNPRTLVFLGHTNMEQIQKLGHHPVRRVIIHPDYRQEEPDNFEGDIALLELENSVTLGPELLPICLPDNETFYGQGLMGYVSGFGTTGNRIPFHLRFVRLPVADREACQRWLWTKKDTSPFSQNMFCSGDPAVQQDACQGDSGGVFAVRDRNRDIWVATGIVSWGIGCGEGYGFYTKVLNYVDWIKKEMGDEN.

The signal sequence occupies residues 1–16 (MWLFALLVTLFYGVEG). Positions 17–140 (SIYLPQKLYG…KGFLAYYQAV (124 aa)) constitute a CUB 1 domain. Ca(2+) is bound by residues Glu-65, Asp-73, and Asp-118. Cys-70 and Cys-88 are disulfide-bonded. Residue Asn-124 is glycosylated (N-linked (GlcNAc...) asparagine). Residues Asp-141, Leu-142, and Glu-144 each coordinate Ca(2+). The 49-residue stretch at 141-189 (DLDECASQPNSVEEGLQPRCQHLCHNYVGGYFCSCHPGYELQKDGQSCQ) folds into the EGF-like; calcium-binding domain. Cystine bridges form between Cys-145–Cys-164, Cys-160–Cys-173, Cys-175–Cys-188, and Cys-192–Cys-219. Ca(2+)-binding residues include Asn-166, Tyr-167, and Gly-170. Asn-166 bears the (3R)-3-hydroxyasparagine mark. Positions 192–304 (CSSELYTEPS…RGWKLHYTTE (113 aa)) constitute a CUB 2 domain. The residue at position 205 (Ser-205) is a Phosphoserine; by CK2. Residue Asn-220 is glycosylated (N-linked (GlcNAc...) asparagine). 4 residues coordinate Ca(2+): Asp-242, Asp-252, Asp-289, and Asp-293. Cys-249 and Cys-267 are joined by a disulfide. 2 consecutive Sushi domains span residues 306 to 372 (IKCP…RCKI) and 373 to 448 (KNCG…RCLP). 5 disulfides stabilise this stretch: Cys-308-Cys-357, Cys-337-Cys-370, Cys-375-Cys-428, Cys-405-Cys-446, and Cys-450-Cys-578. Residues 463-703 (IIGGQPARPG…YVDWIKKEMG (241 aa)) form the Peptidase S1 domain. Catalysis depends on charge relay system residues His-501 and Asp-558. N-linked (GlcNAc...) asparagine glycosylation occurs at Asn-582. Cystine bridges form between Cys-621–Cys-640 and Cys-651–Cys-681. Catalysis depends on Ser-655, which acts as the Charge relay system.

It belongs to the peptidase S1 family. In terms of assembly, core component of the complement C1 complex, a calcium-dependent complex composed of 1 molecule of the C1Q subcomplex, 2 molecules of C1R and 2 molecules of C1S. The C1Q subcomplex is composed 18 subunits: 3 chains of C1QA, C1QB, and C1QC trimerize to form 6 collagen-like triple helices connected to six globular ligand-recognition modules. Within the C1 complex, C1R is a dimer of identical chains, each of which is activated by cleavage into two chains, heavy and light, connected by disulfide bonds. Cleaved and activated by autocatalytic processing to generate Complement C1r subcomponent heavy and light chains that are connected by disulfide bonds. In terms of processing, the iron and 2-oxoglutarate dependent 3-hydroxylation of aspartate and asparagine is (R) stereospecific within EGF domains.

It localises to the secreted. It is found in the cell surface. It carries out the reaction Selective cleavage of Lys(or Arg)-|-Ile bond in complement subcomponent C1s to form the active form of C1s (EC 3.4.21.42).. Activated by the C1Q subcomplex of the C1 complex following C1Q binding to immunoglobulins (IgG or IgM) complexed with antigens to form antigen-antibody complexes on the surface of pathogens. Immunoglobulin-binding promotes autoactivation of C1R, which results in the cleavage of the Arg-Ile bond in the catalytic domain. In terms of biological role, serine protease component of the complement C1 complex, a multiprotein complex that initiates the classical pathway of the complement system, a cascade of proteins that leads to phagocytosis and breakdown of pathogens and signaling that strengthens the adaptive immune system. C1R catalyzes the first enzymatic step in the classical complement pathway: it is activated by the C1Q subcomplex of the C1 complex, which associates with IgG or IgM immunoglobulins complexed with antigens to form antigen-antibody complexes on the surface of pathogens. Immunoglobulin-binding promotes the autocatalytic cleavage and activation of C1R. Activated C1R then cleaves and activates C1S, the second protease of the classical complement pathway. It is unclear if C1R activates C1S within single, strained C1 complexes or between neighboring C1 complexes on surfaces. This Mus musculus (Mouse) protein is Complement C1r-B subcomponent (C1rb).